A 473-amino-acid polypeptide reads, in one-letter code: UDP-N-acetylmuramate--L-alanine ligase (473 aa).

Residue 122-128 (GTHGKTT) participates in ATP binding.

It belongs to the MurCDEF family.

It is found in the cytoplasm. The catalysed reaction is UDP-N-acetyl-alpha-D-muramate + L-alanine + ATP = UDP-N-acetyl-alpha-D-muramoyl-L-alanine + ADP + phosphate + H(+). The protein operates within cell wall biogenesis; peptidoglycan biosynthesis. Cell wall formation. In Teredinibacter turnerae (strain ATCC 39867 / T7901), this protein is UDP-N-acetylmuramate--L-alanine ligase.